Consider the following 157-residue polypeptide: MSRKNKKIKKKIFVDTRYNSRIVAKFANRMMYDGKKSISESILYSSIDLLADKLEDSDKMAVFCKALDNIKPLVEVRSRRVGGATYQVPVEVREERREALAMKWIIFAARKASGRSMKEKLSNELLNAYNSTGAAFKKKEDTHRMAEANKAFTHYRW.

Belongs to the universal ribosomal protein uS7 family. As to quaternary structure, part of the 30S ribosomal subunit. Contacts proteins S9 and S11.

In terms of biological role, one of the primary rRNA binding proteins, it binds directly to 16S rRNA where it nucleates assembly of the head domain of the 30S subunit. Is located at the subunit interface close to the decoding center, probably blocks exit of the E-site tRNA. The protein is Small ribosomal subunit protein uS7 of Borreliella afzelii (strain PKo) (Borrelia afzelii).